The primary structure comprises 90 residues: Cluster 41 protein AFLA_114800 (90 aa).

The chain crosses the membrane as a helical span at residues 55–77 (GLLLLCCFYPIGNLILLVRLSLV). Residue Asn-80 is glycosylated (N-linked (GlcNAc...) asparagine).

Its subcellular location is the membrane. In terms of biological role, cluster 41 protein; part of the gene cluster 41 that mediates the biosynthesis of an extracellular and diffusible metabolite that is able to stimulate colony sclerotial production. The chain is Cluster 41 protein AFLA_114800 from Aspergillus flavus (strain ATCC 200026 / FGSC A1120 / IAM 13836 / NRRL 3357 / JCM 12722 / SRRC 167).